A 152-amino-acid chain; its full sequence is Protein CHLOROPLAST VESICULATION (152 aa).

The N-terminal 22 residues, 1–22, are a transit peptide targeting the chloroplast; that stretch reads MAGRISCCLNLPPLDSNSAQSL. The helical transmembrane segment at 48-65 threads the bilayer; the sequence is CSFVLGVAATVVIGGIQI. An important for chloroplast destabilization and the formation of CV-containing vesicles region spans residues 92-152; sequence RWSDKRTCPP…RVNRGGCFSV (61 aa).

In terms of assembly, interacts with the photosystem II subunit PsbO1 via its C-terminal region in the chloroplast thylakoid membrane and in CV-containing vesicles (CCVs). As to expression, mostly expressed in senescent and mature leaves but not in young leaves.

The protein localises to the plastid. Its subcellular location is the chloroplast membrane. The protein resides in the chloroplast thylakoid membrane. It is found in the chloroplast envelope. It localises to the vacuole. The protein localises to the vesicle. Functionally, triggers stress-induced chloroplast degradation, independently of autophagy and senescence-associated vacuoles. After targeting to the chloroplast, triggers its destabilization and subsequent disassembly, inducing the formation of CV-containing vesicles (CCVs) carrying stromal proteins, envelope membrane proteins, and thylakoid membrane proteins which are released from the chloroplasts and mobilized to the vacuole for proteolysis. This chain is Protein CHLOROPLAST VESICULATION, found in Arabidopsis thaliana (Mouse-ear cress).